The chain runs to 383 residues: uncharacterized protein (383 aa).

Residues 58–383 (GKGATRTQAR…RVGRRIRSSI (326 aa)) enclose the YcaO domain. The segment at 80–100 (AERKPEDETFTAHPEDCDGLD) is disordered.

This is an uncharacterized protein from Methanothermobacter thermautotrophicus (strain ATCC 29096 / DSM 1053 / JCM 10044 / NBRC 100330 / Delta H) (Methanobacterium thermoautotrophicum).